The following is a 631-amino-acid chain: Phosphomethylpyrimidine synthase (631 aa).

The tract at residues 54–80 is disordered; the sequence is TLVGGDKDKPRYETNEPIPVYDTSGPY. Residues 58 to 67 are compositionally biased toward basic and acidic residues; the sequence is GDKDKPRYET. Substrate contacts are provided by residues Asn-239, Met-268, Tyr-297, His-333, 353–355, 394–397, and Glu-433; these read SRG and DGLR. His-437 is a Zn(2+) binding site. A substrate-binding site is contributed by Tyr-460. Position 501 (His-501) interacts with Zn(2+). 3 residues coordinate [4Fe-4S] cluster: Cys-581, Cys-584, and Cys-589.

The protein belongs to the ThiC family. Homodimer. The cofactor is [4Fe-4S] cluster.

The enzyme catalyses 5-amino-1-(5-phospho-beta-D-ribosyl)imidazole + S-adenosyl-L-methionine = 4-amino-2-methyl-5-(phosphooxymethyl)pyrimidine + CO + 5'-deoxyadenosine + formate + L-methionine + 3 H(+). Its pathway is cofactor biosynthesis; thiamine diphosphate biosynthesis. Functionally, catalyzes the synthesis of the hydroxymethylpyrimidine phosphate (HMP-P) moiety of thiamine from aminoimidazole ribotide (AIR) in a radical S-adenosyl-L-methionine (SAM)-dependent reaction. The protein is Phosphomethylpyrimidine synthase of Klebsiella pneumoniae subsp. pneumoniae (strain ATCC 700721 / MGH 78578).